A 265-amino-acid polypeptide reads, in one-letter code: Small ribosomal subunit protein uS3 (265 aa).

The 69-residue stretch at 39–107 (VRDFLKKKLK…PVHVNIEEIR (69 aa)) folds into the KH type-2 domain. The segment at 211–265 (NDAPVVEEPQDDRRRRPGRPEGRRREGEGRPGGNRRGGAGAGRRAAPGADAKSGE) is disordered. The span at 221-239 (DDRRRRPGRPEGRRREGEG) shows a compositional bias: basic and acidic residues. A compositionally biased stretch (gly residues) spans 240 to 251 (RPGGNRRGGAGA).

It belongs to the universal ribosomal protein uS3 family. Part of the 30S ribosomal subunit. Forms a tight complex with proteins S10 and S14.

Functionally, binds the lower part of the 30S subunit head. Binds mRNA in the 70S ribosome, positioning it for translation. The chain is Small ribosomal subunit protein uS3 from Cupriavidus necator (strain ATCC 17699 / DSM 428 / KCTC 22496 / NCIMB 10442 / H16 / Stanier 337) (Ralstonia eutropha).